Reading from the N-terminus, the 637-residue chain is Chaperone protein HtpG (637 aa).

Residues 1–328 (MADIEELKFD…SSDLPLNISR (328 aa)) are a; substrate-binding. Positions 329 to 556 (ETLQNNRIVE…DNSMDIRMER (228 aa)) are b. Residues 488–508 (IGASDDSGDKTSEDSGESASD) form a disordered region. Positions 494 to 508 (SGDKTSEDSGESASD) are enriched in basic and acidic residues. The tract at residues 557–637 (FLREQKQLNY…GVLAKIFSSK (81 aa)) is c.

This sequence belongs to the heat shock protein 90 family. As to quaternary structure, homodimer.

The protein resides in the cytoplasm. Its function is as follows. Molecular chaperone. Has ATPase activity. This Anaplasma phagocytophilum (strain HZ) protein is Chaperone protein HtpG.